An 818-amino-acid polypeptide reads, in one-letter code: Myosin-A (818 aa).

Ser19 is modified (phosphoserine; by PKG). The region spanning 97–771 (MSFGDIGLLN…GAKILTKIQR (675 aa)) is the Myosin motor domain. An ATP-binding site is contributed by 191–198 (GESGAGKT). The segment at 661–671 (PHFIRCIKPNE) is actin-binding. The segment at 773-818 (KLVEWENCVSVIEAAILKHKYKQKVNKNIPSLLRVQAHIRKKMVAQ) is tail.

The protein belongs to the TRAFAC class myosin-kinesin ATPase superfamily. Myosin family. As to quaternary structure, component of the glideosome complex composed of GAP50, GAP45, MTIP and MyoA; the complex is formed during the late schizont stage and in merozoites. MyoA, MTIP and GAP45 probably form an initial complex in the cytoplasm which is then recruited to the outer face of the inner membrane complex via the interaction with GAP50. Interacts with ACT1.

The protein resides in the cell membrane. Myosins are actin-based motor molecules with ATPase activity. Unconventional myosins serve in intracellular movements. Their highly divergent tails are presumed to bind to membranous compartments, which would be moved relative to actin filaments. This Plasmodium falciparum (isolate 3D7) protein is Myosin-A.